The primary structure comprises 316 residues: Secreted effector protein SifB (316 aa).

The protein belongs to the Sif family.

Its subcellular location is the secreted. It localises to the host cytoplasm. Effector proteins function to alter host cell physiology and promote bacterial survival in host tissues. This chain is Secreted effector protein SifB (sifB), found in Salmonella typhimurium (strain LT2 / SGSC1412 / ATCC 700720).